A 1017-amino-acid polypeptide reads, in one-letter code: Fanconi-associated nuclease 1 (1017 aa).

The span at 1 to 10 shows a compositional bias: basic and acidic residues; sequence MMSEGKPPDK. The segment at 1–23 is disordered; sequence MMSEGKPPDKKRPRRSLSISKNK. Basic residues predominate over residues 11–23; sequence KRPRRSLSISKNK. The D-box motif lies at 14–22; that stretch reads RRSLSISKN. The UBZ4-type zinc finger occupies 41–69; that stretch reads KLACPVCSKMVPRYDLNRHLDEMCANNDF. Zn(2+) is bound by residues cysteine 44, cysteine 47, histidine 59, and cysteine 64. Disordered stretches follow at residues 95–121 and 170–189; these read EDVT…KREV and IDKD…STVV. Residues 179 to 189 show a composition bias toward polar residues; sequence SSPQSSKSTVV. Serine 180 is modified (phosphoserine). The short motif at 212-214 is the KEN box element; sequence KEN. A coiled-coil region spans residues 671–696; the sequence is SRFVEILQRLHMYEEAVRELESLLSQ. Mn(2+) contacts are provided by glutamate 834, aspartate 960, glutamate 975, and valine 976. Positions 895-1007 constitute a VRR-NUC domain; the sequence is EESLRAWVAA…GAEVEVCHVV (113 aa).

It belongs to the FAN1 family. As to quaternary structure, interacts with FANCD2 (when monoubiquitinated). Interacts with FANCI, MLH1, MLH3 and PMS2. Mn(2+) is required as a cofactor. Requires Mg(2+) as cofactor. In terms of processing, ubiquitinated and degraded during mitotic exit by the APC/C-Cdh1 complex.

The protein resides in the nucleus. It carries out the reaction Hydrolytically removes 5'-nucleotides successively from the 3'-hydroxy termini of 3'-hydroxy-terminated oligonucleotides.. Nuclease required for the repair of DNA interstrand cross-links (ICL) recruited at sites of DNA damage by monoubiquitinated FANCD2. Specifically involved in repair of ICL-induced DNA breaks by being required for efficient homologous recombination, probably in the resolution of homologous recombination intermediates. Not involved in DNA double-strand breaks resection. Acts as a 5'-3' exonuclease that anchors at a cut end of DNA and cleaves DNA successively at every third nucleotide, allowing to excise an ICL from one strand through flanking incisions. Probably keeps excising with 3'-flap annealing until it reaches and unhooks the ICL. Acts at sites that have a 5'-terminal phosphate anchor at a nick or a 1- or 2-nucleotide flap and is augmented by a 3' flap. Also has endonuclease activity toward 5'-flaps. The protein is Fanconi-associated nuclease 1 of Homo sapiens (Human).